We begin with the raw amino-acid sequence, 296 residues long: Formamidopyrimidine-DNA glycosylase (296 aa).

Residue P2 is the Schiff-base intermediate with DNA of the active site. E3 serves as the catalytic Proton donor. The Proton donor; for beta-elimination activity role is filled by K58. 3 residues coordinate DNA: H106, R125, and K168. Residues 259–295 (RVYDRVGHACPTKGCTGRIGRIVQGGRSTFFCETCQV) form an FPG-type zinc finger. The active-site Proton donor; for delta-elimination activity is the R285.

The protein belongs to the FPG family. As to quaternary structure, monomer. Requires Zn(2+) as cofactor.

The catalysed reaction is Hydrolysis of DNA containing ring-opened 7-methylguanine residues, releasing 2,6-diamino-4-hydroxy-5-(N-methyl)formamidopyrimidine.. The enzyme catalyses 2'-deoxyribonucleotide-(2'-deoxyribose 5'-phosphate)-2'-deoxyribonucleotide-DNA = a 3'-end 2'-deoxyribonucleotide-(2,3-dehydro-2,3-deoxyribose 5'-phosphate)-DNA + a 5'-end 5'-phospho-2'-deoxyribonucleoside-DNA + H(+). Involved in base excision repair of DNA damaged by oxidation or by mutagenic agents. Acts as a DNA glycosylase that recognizes and removes damaged bases. Has a preference for oxidized purines, such as 7,8-dihydro-8-oxoguanine (8-oxoG). Has AP (apurinic/apyrimidinic) lyase activity and introduces nicks in the DNA strand. Cleaves the DNA backbone by beta-delta elimination to generate a single-strand break at the site of the removed base with both 3'- and 5'-phosphates. This is Formamidopyrimidine-DNA glycosylase from Methylorubrum populi (strain ATCC BAA-705 / NCIMB 13946 / BJ001) (Methylobacterium populi).